A 1363-amino-acid polypeptide reads, in one-letter code: Spike glycoprotein (1363 aa).

The signal sequence occupies residues 1-13; the sequence is MFLILLISLPMAF. The Extracellular segment spans residues 14 to 1307; that stretch reads AVIGDLKCTT…GTYEYYVKWP (1294 aa). In terms of domain architecture, BetaCoV S1-NTD spans 15 to 298; sequence VIGDLKCTTV…DFMSEIKCKT (284 aa). 5 cysteine pairs are disulfide-bonded: cysteine 21–cysteine 165, cysteine 160–cysteine 193, cysteine 172–cysteine 252, cysteine 286–cysteine 296, and cysteine 331–cysteine 356. Asparagine 59 and asparagine 133 each carry an N-linked (GlcNAc...) asparagine; by host glycan. A glycan (N-linked (GlcNAc...) asparagine; by host) is linked at asparagine 198. Residues 329 to 617 form the BetaCoV S1-CTD domain; the sequence is PDCNIEAWLN…DVNSGTTCST (289 aa). Residue asparagine 359 is glycosylated (N-linked (GlcNAc...) asparagine; by host). Intrachain disulfides connect cysteine 374/cysteine 427 and cysteine 386/cysteine 615. Residues asparagine 437, asparagine 649, asparagine 676, asparagine 696, asparagine 714, asparagine 739, and asparagine 788 are each glycosylated (N-linked (GlcNAc...) asparagine; by host). Fusion peptide regions lie at residues 914-935 and 933-953; these read SAIE…VEAY and EAYN…VQSY. The N-linked (GlcNAc...) asparagine; by host glycan is linked to asparagine 937. Cysteine 938 and cysteine 949 form a disulfide bridge. The heptad repeat 1 stretch occupies residues 1014 to 1064; sequence QKLIANAFNNALDAIQEGFDATNSALVKIQAVVNANAEALNNLLQQLSNRF. A coiled-coil region spans residues 1043 to 1087; the sequence is QAVVNANAEALNNLLQQLSNRFGAISSSLQEILSRLDALEAQAQI. Asparagine 1194, asparagine 1224, asparagine 1234, asparagine 1253, asparagine 1267, and asparagine 1288 each carry an N-linked (GlcNAc...) asparagine; by host glycan. The interval 1258-1296 is heptad repeat 2; the sequence is APDLSLDYINVTFLDLQDEMNRLQEAIKVLNQSYINLKD. A coiled-coil region spans residues 1269-1297; the sequence is TFLDLQDEMNRLQEAIKVLNQSYINLKDI. A helical membrane pass occupies residues 1308 to 1328; sequence WYVWLLIGFAGVAMLVLLFFI. Over 1329–1363 the chain is Cytoplasmic; the sequence is CCCTGCGTSCFKICGGCCDDYTGHQELVIKTSHDD. Residues 1359-1363 carry the KxHxx motif; the sequence is TSHDD.

This sequence belongs to the betacoronaviruses spike protein family. Homotrimer; each monomer consists of a S1 and a S2 subunit. The resulting peplomers protrude from the virus surface as spikes. Post-translationally, specific enzymatic cleavages in vivo yield mature proteins. The precursor is processed into S1 and S2 by host cell furin or another cellular protease to yield the mature S1 and S2 proteins. Additionally, a second cleavage leads to the release of a fusion peptide after viral attachment to host cell receptor. The cytoplasmic Cys-rich domain is palmitoylated. Spike glycoprotein is digested within host endosomes.

The protein localises to the virion membrane. Its subcellular location is the host endoplasmic reticulum-Golgi intermediate compartment membrane. It is found in the host cell membrane. Functionally, attaches the virion to the cell membrane by interacting with host receptor, initiating the infection. In terms of biological role, mediates fusion of the virion and cellular membranes by acting as a class I viral fusion protein. Under the current model, the protein has at least three conformational states: pre-fusion native state, pre-hairpin intermediate state, and post-fusion hairpin state. During viral and target cell membrane fusion, the coiled coil regions (heptad repeats) assume a trimer-of-hairpins structure, positioning the fusion peptide in close proximity to the C-terminal region of the ectodomain. The formation of this structure appears to drive apposition and subsequent fusion of viral and target cell membranes. Its function is as follows. Acts as a viral fusion peptide which is unmasked following S2 cleavage occurring upon virus endocytosis. This chain is Spike glycoprotein, found in Bovine coronavirus (strain vaccine) (BCoV).